Here is a 216-residue protein sequence, read N- to C-terminus: Molybdenum cofactor guanylyltransferase (216 aa).

Residues 16 to 18, Lys28, Asn57, Asp73, and Asp108 each bind GTP; that span reads LAG. Position 108 (Asp108) interacts with Mg(2+).

The protein belongs to the MobA family. Monomer. Mg(2+) serves as cofactor.

Its subcellular location is the cytoplasm. It carries out the reaction Mo-molybdopterin + GTP + H(+) = Mo-molybdopterin guanine dinucleotide + diphosphate. Transfers a GMP moiety from GTP to Mo-molybdopterin (Mo-MPT) cofactor (Moco or molybdenum cofactor) to form Mo-molybdopterin guanine dinucleotide (Mo-MGD) cofactor. This is Molybdenum cofactor guanylyltransferase from Rhizobium rhizogenes (strain K84 / ATCC BAA-868) (Agrobacterium radiobacter).